The chain runs to 354 residues: MRVTDFSFELPESLIAHYPQPERSRCRLLSLEGPTGALTHGTFTDLLDKLNPGDLLVFNNTRVIPARLFGRKASGGKIEVLVERMLDDKRILAHIRASKAPKPGTELLLGDDESIHATMTARHGALFEVEFNDPRPVLDILNAIGHMPLPPYIDRPDEDADRELYQTVYSEKPGAVAAPTAGLHFDEPLLAALREKGIEMAFVTLHVGAGTFQPVRVDTIEDHIMHSEYAEVPQEVVDAVLAAKARGNRVIAVGTTSVRSLESAAQAAKNDLIEPLFGDTQIFIYPGYQYKVIDALITNFHLPESTLIMLVSAFAGYQHTMNAYKTAVEQKYRFFSYGDAMFITYNPQAISERP.

Belongs to the QueA family. As to quaternary structure, monomer.

It localises to the cytoplasm. The catalysed reaction is 7-aminomethyl-7-carbaguanosine(34) in tRNA + S-adenosyl-L-methionine = epoxyqueuosine(34) in tRNA + adenine + L-methionine + 2 H(+). The protein operates within tRNA modification; tRNA-queuosine biosynthesis. Transfers and isomerizes the ribose moiety from AdoMet to the 7-aminomethyl group of 7-deazaguanine (preQ1-tRNA) to give epoxyqueuosine (oQ-tRNA). In Salmonella gallinarum (strain 287/91 / NCTC 13346), this protein is S-adenosylmethionine:tRNA ribosyltransferase-isomerase.